Here is a 197-residue protein sequence, read N- to C-terminus: MKKVIIIDASVSPSGSYTHLLLERFLATFQAKNKDVELSTWNLNELPVGQISYNTQNAGTFFSVENSDKYIDALKAAHGVIILAPMTNFNYPATLKNFIDHVFVANKTFKDKYVTKGASSGMLGNLKVVVLGSQGAPLGWYPWGDHVNSLRGLFGFAGVASFASVIIDGTKLLYKDKSKSEVVDMFAKQVDAIANEF.

Residue Ser-10 coordinates FMN.

Belongs to the azoreductase type 1 family. As to quaternary structure, homodimer. FMN serves as cofactor.

The catalysed reaction is 2 a quinone + NADH + H(+) = 2 a 1,4-benzosemiquinone + NAD(+). The enzyme catalyses N,N-dimethyl-1,4-phenylenediamine + anthranilate + 2 NAD(+) = 2-(4-dimethylaminophenyl)diazenylbenzoate + 2 NADH + 2 H(+). In terms of biological role, quinone reductase that provides resistance to thiol-specific stress caused by electrophilic quinones. Functionally, also exhibits azoreductase activity. Catalyzes the reductive cleavage of the azo bond in aromatic azo compounds to the corresponding amines. This chain is FMN-dependent NADH:quinone oxidoreductase, found in Mycoplasma pneumoniae (strain ATCC 29342 / M129 / Subtype 1) (Mycoplasmoides pneumoniae).